The sequence spans 311 residues: tRNA dimethylallyltransferase (311 aa).

13–20 (GPTASGKT) provides a ligand contact to ATP. 15–20 (TASGKT) contacts substrate. Interaction with substrate tRNA regions lie at residues 38 to 41 (DSMQ) and 166 to 170 (QRVLR).

This sequence belongs to the IPP transferase family. In terms of assembly, monomer. It depends on Mg(2+) as a cofactor.

The catalysed reaction is adenosine(37) in tRNA + dimethylallyl diphosphate = N(6)-dimethylallyladenosine(37) in tRNA + diphosphate. Functionally, catalyzes the transfer of a dimethylallyl group onto the adenine at position 37 in tRNAs that read codons beginning with uridine, leading to the formation of N6-(dimethylallyl)adenosine (i(6)A). This chain is tRNA dimethylallyltransferase, found in Staphylococcus aureus (strain MRSA252).